The primary structure comprises 188 residues: Elongation factor P (188 aa).

It belongs to the elongation factor P family.

The protein resides in the cytoplasm. It functions in the pathway protein biosynthesis; polypeptide chain elongation. In terms of biological role, involved in peptide bond synthesis. Stimulates efficient translation and peptide-bond synthesis on native or reconstituted 70S ribosomes in vitro. Probably functions indirectly by altering the affinity of the ribosome for aminoacyl-tRNA, thus increasing their reactivity as acceptors for peptidyl transferase. This Wolbachia pipientis wMel protein is Elongation factor P.